The sequence spans 143 residues: Large ribosomal subunit protein uL15 (143 aa).

Residues 20 to 52 (GRGIGSGKGKTAGRGHKGQHSRAGGYHKVGFEG) form a disordered region. A compositionally biased stretch (basic residues) spans 30 to 39 (TAGRGHKGQH).

The protein belongs to the universal ribosomal protein uL15 family. In terms of assembly, part of the 50S ribosomal subunit.

Its function is as follows. Binds to the 23S rRNA. The sequence is that of Large ribosomal subunit protein uL15 from Coxiella burnetii (strain CbuG_Q212) (Coxiella burnetii (strain Q212)).